A 90-amino-acid polypeptide reads, in one-letter code: Barrier-to-autointegration factor B (90 aa).

It belongs to the BAF family. As to quaternary structure, homodimer. Interacts with nemp1a and nemp1b.

Its subcellular location is the nucleus. It is found in the chromosome. The protein localises to the nucleus envelope. It localises to the cytoplasm. In terms of biological role, non-specific DNA-binding protein that plays key roles in mitotic nuclear reassembly, chromatin organization, DNA damage response, gene expression and intrinsic immunity against foreign DNA. Contains two non-specific double-stranded DNA (dsDNA)-binding sites which promote DNA cross-bridging. Plays a key role in nuclear membrane reformation at the end of mitosis by driving formation of a single nucleus in a spindle-independent manner. Transiently cross-bridges anaphase chromosomes via its ability to bridge distant DNA sites, leading to the formation of a dense chromatin network at the chromosome ensemble surface that limits membranes to the surface. Also acts as a negative regulator of innate immune activation by restricting CGAS activity toward self-DNA upon acute loss of nuclear membrane integrity. Outcompetes CGAS for DNA-binding, thereby preventing CGAS activation and subsequent damaging autoinflammatory responses. Also involved in DNA damage response; acts by inhibiting the ADP-ribosyltransferase activity of PARP1. Involved in the recognition of exogenous dsDNA in the cytosol: associates with exogenous dsDNA immediately after its appearance in the cytosol at endosome breakdown and is required to avoid autophagy. The sequence is that of Barrier-to-autointegration factor B (banf1-b) from Xenopus laevis (African clawed frog).